Here is a 281-residue protein sequence, read N- to C-terminus: N-methyltransferase tcpN (281 aa).

Belongs to the methyltransferase superfamily. LaeA methyltransferase family.

Its pathway is secondary metabolite biosynthesis. Its function is as follows. N-methyltransferase; part of the gene cluster that mediates the biosynthesis of an unusual class of epipolythiodioxopiperazines (ETPs) lacking the reactive thiol group important for toxicity. Firstly, L-tyrosine is prenylated by tcpD, before undergoing condensation with L-glycine in a reaction catalyzed by the NRPS tcpP leading to the diketopiperazine (DKP) backbone. Afterwards the alpha-carbon of tyrosine is oxidized by the cytochrome P450 tcpC to form a hydroxyl group. However, in contrast other ETP biosynthesis pathways studied so far, tcpC is not able to bishydroxylate the DKP at both alpha-carbon positions, but hydroxylates the alpha-carbon of the tyrosine part and the nitrogen of the glycine part. The next steps involve an alpha,beta-elimination reaction catalyzed by tcpI, a methylation by the methyltransferase tcpN the action of the four enzyme cascade tcpG/K/J/I. Due to a dysfunctional cytochrome P450 monooxygenase tcpC, the pathway leads to the biosynthesis of probable non-toxic metabolites lacking the reactive thiol group. The polypeptide is N-methyltransferase tcpN (Claviceps purpurea (strain 20.1) (Ergot fungus)).